Consider the following 116-residue polypeptide: Large ribosomal subunit protein bL17 (116 aa).

This sequence belongs to the bacterial ribosomal protein bL17 family. In terms of assembly, part of the 50S ribosomal subunit. Contacts protein L32.

The chain is Large ribosomal subunit protein bL17 from Dictyoglomus turgidum (strain DSM 6724 / Z-1310).